Reading from the N-terminus, the 185-residue chain is Ribosome-recycling factor (185 aa).

This sequence belongs to the RRF family.

The protein resides in the cytoplasm. Its function is as follows. Responsible for the release of ribosomes from messenger RNA at the termination of protein biosynthesis. May increase the efficiency of translation by recycling ribosomes from one round of translation to another. This chain is Ribosome-recycling factor, found in Xanthomonas euvesicatoria pv. vesicatoria (strain 85-10) (Xanthomonas campestris pv. vesicatoria).